A 401-amino-acid chain; its full sequence is Glycerol-3-phosphate dehydrogenase [NAD(+)] 1 (401 aa).

NAD(+)-binding positions include 40–45 (GSGNWG), phenylalanine 128, lysine 151, and alanine 184. Lysine 151 contributes to the substrate binding site. Lysine 244 functions as the Proton acceptor in the catalytic mechanism. 2 residues coordinate NAD(+): arginine 309 and glutamine 338. Substrate is bound at residue 309-310 (RN).

This sequence belongs to the NAD-dependent glycerol-3-phosphate dehydrogenase family.

It localises to the cytoplasm. It carries out the reaction sn-glycerol 3-phosphate + NAD(+) = dihydroxyacetone phosphate + NADH + H(+). This is Glycerol-3-phosphate dehydrogenase [NAD(+)] 1 (GPD1) from Zygosaccharomyces rouxii.